The chain runs to 30 residues: LIM and SH3 domain protein 1 (30 aa).

At Met1 the chain carries N-acetylmethionine. The 26-residue stretch at 5-30 (CARCGKIVYPTEKVNCLDKFWHKACF) folds into the LIM zinc-binding domain.

As to quaternary structure, interacts with F-actin. Interacts with ANKRD54. Interacts with KBTBD10. Phosphorylated.

The protein localises to the cytoplasm. Its subcellular location is the cell cortex. It localises to the cytoskeleton. Functionally, plays an important role in the regulation of dynamic actin-based, cytoskeletal activities. Agonist-dependent changes in LASP1 phosphorylation may also serve to regulate actin-associated ion transport activities, not only in the parietal cell but also in certain other F-actin-rich secretory epithelial cell types. This is LIM and SH3 domain protein 1 (LASP1) from Sus scrofa (Pig).